Here is a 427-residue protein sequence, read N- to C-terminus: Stabilizer of axonemal microtubules 4 (427 aa).

3 disordered regions span residues 82-105 (TSKS…PLPW), 273-298 (RTLN…QPPQ), and 314-335 (GNKE…SYEQ). Polar residues-rich tracts occupy residues 287–298 (ASMSHRSYQPPQ) and 321–332 (FTLNNPSYVRSS).

In terms of assembly, microtubule inner protein component of sperm flagellar doublet microtubules. Interacts with PPP1CA.

The protein resides in the cell projection. It is found in the cilium. It localises to the cytoplasm. The protein localises to the cytoskeleton. Its subcellular location is the flagellum axoneme. This chain is Stabilizer of axonemal microtubules 4, found in Mus musculus (Mouse).